We begin with the raw amino-acid sequence, 172 residues long: MARKPGRMYKKFSGPAYTRREYMGGVPGVKVAQFDMGNLTEELPIAVTLVVNETCQIRHDALEAARISANRYLLNDVGKTNYRFKVRVYPHQVLRENKQATGAGADRVSDGMRRAFGKAVGTAARVYEGQGVFTIWVNRANFEKAKEAMRRAGHKLPTPYRVVVEKGAELVK.

It belongs to the universal ribosomal protein uL16 family.

The polypeptide is Large ribosomal subunit protein uL16 (Methanocella arvoryzae (strain DSM 22066 / NBRC 105507 / MRE50)).